The primary structure comprises 610 residues: Menin (610 aa).

Positions 214-390 (GVAERSWLYL…SLLEAGEERP (177 aa)) are interaction with FANCD2. Disordered stretches follow at residues 385 to 404 (AGEE…GSAL) and 460 to 552 (REAE…PVLT). The span at 393-402 (QTQGTQSQGS) shows a compositional bias: low complexity. Positions 484–500 (RRESKPEEPPPPKKPAL) are enriched in basic and acidic residues. Residue Ser487 is modified to Phosphoserine. Composition is skewed to pro residues over residues 512-521 (PGPPRKPPGT) and 537-548 (VPAPAASPPPEG). A Phosphoserine modification is found at Ser543. Phosphothreonine is present on Thr594.

Component of the MLL-HCF complex, at least composed of KMT2A/MLL1, MEN1, ASH2L, RBBP5, DPY30, WDR5, HCFC1 and HCFC2. Component of the menin-associated histone methyltransferase complex, at least composed of KMT2B/MLL4, MEN1, ASH2L, RBBP5, DPY30 and WDR5. Interacts with POLR2B. Interacts with POLR2A phosphorylated at 'Ser-5', but not with the unphosphorylated, nor 'Ser-2' phosphorylated POLR2A forms. Interacts with FANCD2 and DBF4. Interacts with SMAD3, but not with SMAD2, nor SMAD4. Directly interacts with NFKB1, NFKB2 and RELA. Interacts with JUND (via MBM motif); inhibits the interaction of JUND with MAPK10 and the phosphorylation of JUND by MAP kinases MAPK8 and MAPK10. Interacts with KMT2A (via MBM motif). The KMT2A-MEN1 complex interacts with PSIP1 with a greater affinity as MEN1 enhances interaction of KMT2A with PSIP1.

It is found in the nucleus. Its function is as follows. Essential component of a MLL/SET1 histone methyltransferase (HMT) complex, a complex that specifically methylates 'Lys-4' of histone H3 (H3K4). Functions as a transcriptional regulator. Binds to the TERT promoter and represses telomerase expression. Plays a role in TGFB1-mediated inhibition of cell-proliferation, possibly regulating SMAD3 transcriptional activity. Represses JUND-mediated transcriptional activation on AP1 sites, as well as that mediated by NFKB subunit RELA. Positively regulates HOXC8 and HOXC6 gene expression. May be involved in normal hematopoiesis through the activation of HOXA9 expression. May be involved in DNA repair. The sequence is that of Menin (MEN1) from Bos taurus (Bovine).